The primary structure comprises 235 residues: Ribonuclease PH (235 aa).

Residues Arg-86 and 124 to 126 (GTR) contribute to the phosphate site.

This sequence belongs to the RNase PH family. As to quaternary structure, homohexameric ring arranged as a trimer of dimers.

It catalyses the reaction tRNA(n+1) + phosphate = tRNA(n) + a ribonucleoside 5'-diphosphate. Phosphorolytic 3'-5' exoribonuclease that plays an important role in tRNA 3'-end maturation. Removes nucleotide residues following the 3'-CCA terminus of tRNAs; can also add nucleotides to the ends of RNA molecules by using nucleoside diphosphates as substrates, but this may not be physiologically important. Probably plays a role in initiation of 16S rRNA degradation (leading to ribosome degradation) during starvation. The chain is Ribonuclease PH from Legionella pneumophila (strain Paris).